A 785-amino-acid polypeptide reads, in one-letter code: Tripartite terminase subunit 1 (785 aa).

The C3H1-type zinc-finger motif lies at 197–225; it reads CAVCFEELCVTANQGATIARRLADRICNH. Residues 433 to 489 are disordered; the sequence is GGAADAPKGGAGPDDDGDRVAVEEGTRGLGAPGGGGEDEDRRRGPGGQGPETWGDIA. 696–703 provides a ligand contact to ATP; the sequence is FASVYRCG.

Belongs to the herpesviridae TRM1 protein family. Associates with TRM2 and TRM3 to form the tripartite terminase complex. Interacts with portal protein.

The protein localises to the host nucleus. Component of the molecular motor that translocates viral genomic DNA in empty capsid during DNA packaging. Forms a tripartite terminase complex together with TRM2 and TRM3 in the host cytoplasm. Once the complex reaches the host nucleus, it interacts with the capsid portal vertex. This portal forms a ring in which genomic DNA is translocated into the capsid. TRM1 carries an endonuclease activity that plays an important role for the cleavage of concatemeric viral DNA into unit length genomes. This is Tripartite terminase subunit 1 from Human herpesvirus 1 (strain Angelotti) (HHV-1).